Here is a 78-residue protein sequence, read N- to C-terminus: Translation initiation factor IF-1, chloroplastic (78 aa).

Residues 1-72 enclose the S1-like domain; that stretch reads MKKQNLIDME…TKGRITYRLR (72 aa).

The protein belongs to the IF-1 family. As to quaternary structure, component of the 30S ribosomal translation pre-initiation complex which assembles on the 30S ribosome in the order IF-2 and IF-3, IF-1 and N-formylmethionyl-tRNA(fMet); mRNA recruitment can occur at any time during PIC assembly.

The protein localises to the plastid. Its subcellular location is the chloroplast. One of the essential components for the initiation of protein synthesis. Stabilizes the binding of IF-2 and IF-3 on the 30S subunit to which N-formylmethionyl-tRNA(fMet) subsequently binds. Helps modulate mRNA selection, yielding the 30S pre-initiation complex (PIC). Upon addition of the 50S ribosomal subunit IF-1, IF-2 and IF-3 are released leaving the mature 70S translation initiation complex. The sequence is that of Translation initiation factor IF-1, chloroplastic from Physcomitrium patens (Spreading-leaved earth moss).